A 342-amino-acid chain; its full sequence is Dysbindin (342 aa).

S11 is modified (phosphoserine). A coiled-coil region spans residues 83 to 180 (LSAHWEKKQA…AELDAEHSQK (98 aa)). The Nuclear export signal signature appears at 243-256 (LMDISDQEALDVFL). A disordered region spans residues 263–342 (NTLLSPISGP…ATLHSDDSDS (80 aa)). The span at 286-305 (PTPSQAPATPPSSSSPGTDP) shows a compositional bias: low complexity. A phosphoserine mark is found at S316, S321, and S340.

This sequence belongs to the dysbindin family. As to quaternary structure, interacts (via its coiled coil domain) with KXD1. Interacts with CMYA5, PI4K2 and RNF151. Component of the biogenesis of lysosome-related organelles complex 1 (BLOC-1) composed of at least BLOC1S1, BLOC1S2, BLOC1S3, BLOC1S4, BLOC1S5, BLOC1S6, DTNBP1/BLOC1S7 and SNAPIN/BLOC1S8. Interacts directly in the complex with BLOC1S5, BLOC1S6 and SNAPIN/BLOC1S8. The BLOC-1 complex associates with the AP-3 protein complex and membrane protein cargos. This BLOC-1 complex also associates with the BLOC-2 complex in endosomes. Binds to DTNA and DTNB but may not be a physiological binding partner. Interacts with the DNA-dependent protein kinase complex DNA-PK; the interaction phosphorylates DTNBP1 in vitro. Interacts directly in this complex with XRCC5 and XRCC6. Interacts with AP3M1, AP3B2 and TRIM32. Interacts with XPO1; the interaction exports DTNBP1 out of the nucleus. Ubiquitinated by TRIM32. Ubiquitination leads to DTNBP1 degradation.

The protein localises to the cytoplasm. The protein resides in the cytoplasmic vesicle membrane. It localises to the cytoplasmic vesicle. It is found in the secretory vesicle. Its subcellular location is the synaptic vesicle membrane. The protein localises to the endosome membrane. The protein resides in the melanosome membrane. It localises to the nucleus. It is found in the postsynaptic density. Its subcellular location is the presynaptic cell membrane. The protein localises to the endoplasmic reticulum. In terms of biological role, component of the BLOC-1 complex, a complex that is required for normal biogenesis of lysosome-related organelles (LRO), such as platelet dense granules and melanosomes. In concert with the AP-3 complex, the BLOC-1 complex is required to target membrane protein cargos into vesicles assembled at cell bodies for delivery into neurites and nerve terminals. The BLOC-1 complex, in association with SNARE proteins, is also proposed to be involved in neurite extension. Associates with the BLOC-2 complex to facilitate the transport of TYRP1 independent of AP-3 function. Plays a role in synaptic vesicle trafficking and in neurotransmitter release. Plays a role in the regulation of cell surface exposure of DRD2. May play a role in actin cytoskeleton reorganization and neurite outgrowth. May modulate MAPK8 phosphorylation. Appears to promote neuronal transmission and viability through regulating the expression of SNAP25 and SYN1, modulating PI3-kinase-Akt signaling and influencing glutamatergic release. Regulates the expression of SYN1 through binding to its promoter. Modulates prefrontal cortical activity via the dopamine/D2 pathway. In Bos taurus (Bovine), this protein is Dysbindin (DTNBP1).